The primary structure comprises 211 residues: Large ribosomal subunit protein uL4 (211 aa).

A disordered region spans residues glutamine 40–glycine 85. A compositionally biased stretch (polar residues) spans glutamine 41–arginine 54. Residues glycine 60–glycine 71 are compositionally biased toward basic residues.

Belongs to the universal ribosomal protein uL4 family. As to quaternary structure, part of the 50S ribosomal subunit.

In terms of biological role, one of the primary rRNA binding proteins, this protein initially binds near the 5'-end of the 23S rRNA. It is important during the early stages of 50S assembly. It makes multiple contacts with different domains of the 23S rRNA in the assembled 50S subunit and ribosome. Its function is as follows. Forms part of the polypeptide exit tunnel. This is Large ribosomal subunit protein uL4 from Prochlorococcus marinus (strain NATL2A).